The chain runs to 570 residues: Urease subunit alpha (570 aa).

In terms of domain architecture, Urease spans 135–570 (GGLDIHVHFN…ELPLAQRYHL (436 aa)). His140, His142, and Lys219 together coordinate Ni(2+). Lys219 carries the N6-carboxylysine modification. His221 provides a ligand contact to substrate. Ni(2+) is bound by residues His248 and His274. His322 serves as the catalytic Proton donor. Asp362 is a Ni(2+) binding site.

It belongs to the metallo-dependent hydrolases superfamily. Urease alpha subunit family. In terms of assembly, heterotrimer of UreA (gamma), UreB (beta) and UreC (alpha) subunits. Three heterotrimers associate to form the active enzyme. The cofactor is Ni cation. In terms of processing, carboxylation allows a single lysine to coordinate two nickel ions.

It is found in the cytoplasm. The enzyme catalyses urea + 2 H2O + H(+) = hydrogencarbonate + 2 NH4(+). It participates in nitrogen metabolism; urea degradation; CO(2) and NH(3) from urea (urease route): step 1/1. This Natronomonas pharaonis (strain ATCC 35678 / DSM 2160 / CIP 103997 / JCM 8858 / NBRC 14720 / NCIMB 2260 / Gabara) (Halobacterium pharaonis) protein is Urease subunit alpha.